A 166-amino-acid polypeptide reads, in one-letter code: NADPH-dependent 7-cyano-7-deazaguanine reductase (166 aa).

Residue cysteine 57 is the Thioimide intermediate of the active site. Aspartate 64 (proton donor) is an active-site residue. Substrate-binding positions include 79 to 81 (VES) and 98 to 99 (HE).

This sequence belongs to the GTP cyclohydrolase I family. QueF type 1 subfamily.

It localises to the cytoplasm. It catalyses the reaction 7-aminomethyl-7-carbaguanine + 2 NADP(+) = 7-cyano-7-deazaguanine + 2 NADPH + 3 H(+). It functions in the pathway tRNA modification; tRNA-queuosine biosynthesis. Catalyzes the NADPH-dependent reduction of 7-cyano-7-deazaguanine (preQ0) to 7-aminomethyl-7-deazaguanine (preQ1). This Alkaliphilus metalliredigens (strain QYMF) protein is NADPH-dependent 7-cyano-7-deazaguanine reductase.